The sequence spans 354 residues: Protein-arginine kinase (354 aa).

One can recognise a Phosphagen kinase C-terminal domain in the interval 24–254; that stretch reads IVLSSRIRLA…QQIIQQEKMA (231 aa). ATP-binding positions include 27–31, His-92, Arg-125, 176–180, and 207–212; these read SSRIR, RASVM, and RGIYGE. The RDXXRA motif of the pArg binding pocket involved in allosteric regulation motif lies at 337–342; the sequence is RDYRRA.

The protein belongs to the ATP:guanido phosphotransferase family.

It catalyses the reaction L-arginyl-[protein] + ATP = N(omega)-phospho-L-arginyl-[protein] + ADP + H(+). Appears to be allosterically activated by the binding of pArg-containing polypeptides to the pArg-binding pocket localized in the C-terminal domain of McsB. Functionally, catalyzes the specific phosphorylation of arginine residues in a large number of proteins. Is part of the bacterial stress response system. Protein arginine phosphorylation has a physiologically important role and is involved in the regulation of many critical cellular processes, such as protein homeostasis, motility, competence, and stringent and stress responses, by regulating gene expression and protein activity. The sequence is that of Protein-arginine kinase from Bacillus cereus (strain AH187).